The sequence spans 434 residues: Adenylosuccinate synthetase (434 aa).

GTP contacts are provided by residues 22–28 and 50–52; these read GDEGKGK and GHT. The Proton acceptor role is filled by Asp23. Residues Asp23 and Gly50 each contribute to the Mg(2+) site. IMP contacts are provided by residues 23 to 26, 48 to 51, Thr139, Arg153, Gln234, Thr249, and Arg313; these read DEGK and NAGH. His51 serves as the catalytic Proton donor. 309–315 contacts substrate; that stretch reads ATTGRKR. GTP contacts are provided by residues Arg315, 341-343, and 423-425; these read KLD and SVG.

It belongs to the adenylosuccinate synthetase family. Homodimer. Requires Mg(2+) as cofactor.

It is found in the cytoplasm. It catalyses the reaction IMP + L-aspartate + GTP = N(6)-(1,2-dicarboxyethyl)-AMP + GDP + phosphate + 2 H(+). It participates in purine metabolism; AMP biosynthesis via de novo pathway; AMP from IMP: step 1/2. Its function is as follows. Plays an important role in the de novo pathway of purine nucleotide biosynthesis. Catalyzes the first committed step in the biosynthesis of AMP from IMP. The polypeptide is Adenylosuccinate synthetase (Chlorobium limicola (strain DSM 245 / NBRC 103803 / 6330)).